A 796-amino-acid chain; its full sequence is Polyribonucleotide nucleotidyltransferase (796 aa).

Mg(2+) contacts are provided by Asp-490 and Asp-496. Positions 557–616 (PRIESIFINKDKIRNVIGSGGKNIRDICEKTGAKIEIIQDGTVMIYAVNNEAVEYAKSMI) constitute a KH domain. The 68-residue stretch at 626–693 (GKVFEGTVVE…DREHIQLSMR (68 aa)) folds into the S1 motif domain. Low complexity-rich tracts occupy residues 717-728 (DDSCGSTGGSSF), 747-759 (GGSS…NSNG), and 769-784 (SSNG…SNSR). Residues 717–796 (DDSCGSTGGS…HDVPRKPRFF (80 aa)) form a disordered region. Residues 785 to 796 (NGHDVPRKPRFF) show a composition bias toward basic and acidic residues.

It belongs to the polyribonucleotide nucleotidyltransferase family. The cofactor is Mg(2+).

It localises to the cytoplasm. The catalysed reaction is RNA(n+1) + phosphate = RNA(n) + a ribonucleoside 5'-diphosphate. Functionally, involved in mRNA degradation. Catalyzes the phosphorolysis of single-stranded polyribonucleotides processively in the 3'- to 5'-direction. In Ehrlichia chaffeensis (strain ATCC CRL-10679 / Arkansas), this protein is Polyribonucleotide nucleotidyltransferase.